We begin with the raw amino-acid sequence, 139 residues long: MLFDAFTNGFMNDIFEFGDRSKFNRSAWLSCWGPALELRETEDTIEVDVEVPGIDKQNLKVDLHGSKLTISGERKKPEEEKAGPLIRWSERCVGAFSRTITLPQPVDEKLIHASLNNGILSIVMKKKNPEFTTRIVEIQ.

Residues 27-139 (AWLSCWGPAL…EFTTRIVEIQ (113 aa)) enclose the sHSP domain.

It belongs to the small heat shock protein (HSP20) family.

It is found in the mitochondrion. This Schizosaccharomyces pombe (strain 972 / ATCC 24843) (Fission yeast) protein is Heat shock protein homolog C338.06c.